Consider the following 228-residue polypeptide: uncharacterized protein (228 aa).

Residues 5-119 (HILIVEDEEK…ELLARIRAAL (115 aa)) enclose the Response regulatory domain. At aspartate 54 the chain carries 4-aspartylphosphate. A DNA-binding region (ompR/PhoB-type) is located at residues 130–228 (GTFLTYDDLR…IRGVGYAIKG (99 aa)).

Post-translationally, phosphorylated by YkoH.

It is found in the cytoplasm. In terms of biological role, probable member of the two-component regulatory system YkoH/YkoG. This is an uncharacterized protein from Bacillus subtilis (strain 168).